The sequence spans 309 residues: Probable manganese-dependent inorganic pyrophosphatase (309 aa).

The Mn(2+) site is built by histidine 9, aspartate 13, aspartate 15, aspartate 75, histidine 97, and aspartate 149.

It belongs to the PPase class C family. Mn(2+) serves as cofactor.

It is found in the cytoplasm. It catalyses the reaction diphosphate + H2O = 2 phosphate + H(+). The polypeptide is Probable manganese-dependent inorganic pyrophosphatase (Lactiplantibacillus plantarum (strain ATCC BAA-793 / NCIMB 8826 / WCFS1) (Lactobacillus plantarum)).